A 468-amino-acid chain; its full sequence is Putative ankyrin repeat protein R873 (468 aa).

ANK repeat units follow at residues 38 to 68 (IKTD…KHNL), 78 to 107 (SLNE…DIEG), 109 to 137 (DNCA…NFRA), 138 to 167 (NNDK…DIRS), 169 to 197 (NDCS…NIRT), 198 to 227 (NDDW…DIRS), 229 to 257 (DDHA…NIIA), 258 to 287 (EDNY…NITS), 289 to 316 (YYTI…NIRD), 317 to 346 (CDSS…DFRE), 348 to 376 (DDLT…DFRV), 378 to 406 (DDYP…DVRA), 407 to 436 (EDDY…NIRA), and 438 to 466 (NDYA…VLNK).

The sequence is that of Putative ankyrin repeat protein R873 from Acanthamoeba polyphaga mimivirus (APMV).